The following is a 345-amino-acid chain: Dihydroorotase (345 aa).

H13 and H15 together coordinate Zn(2+). Substrate-binding positions include 15–17 and N41; that span reads HLR. 4 residues coordinate Zn(2+): K99, H136, H174, and D247. K99 is modified (N6-carboxylysine). Residue H136 coordinates substrate. D247 is a catalytic residue. Residues H251 and A263 each contribute to the substrate site.

The protein belongs to the metallo-dependent hydrolases superfamily. DHOase family. Class II DHOase subfamily. Homodimer. Requires Zn(2+) as cofactor.

It carries out the reaction (S)-dihydroorotate + H2O = N-carbamoyl-L-aspartate + H(+). The protein operates within pyrimidine metabolism; UMP biosynthesis via de novo pathway; (S)-dihydroorotate from bicarbonate: step 3/3. Catalyzes the reversible cyclization of carbamoyl aspartate to dihydroorotate. In Halorhodospira halophila (strain DSM 244 / SL1) (Ectothiorhodospira halophila (strain DSM 244 / SL1)), this protein is Dihydroorotase.